The sequence spans 215 residues: Peroxiredoxin 1 (215 aa).

The 156-residue stretch at 2–157 (KLLGEKFPSM…ILRALKALQT (156 aa)) folds into the Thioredoxin domain. Cysteine 44 functions as the Cysteine sulfenic acid (-SOH) intermediate in the catalytic mechanism. Substrate is bound at residue arginine 120.

Belongs to the peroxiredoxin family. Prx6 subfamily. In terms of assembly, homodecamer. Pentamer of dimers that assemble into a ring structure.

Its subcellular location is the cytoplasm. The enzyme catalyses a hydroperoxide + [thioredoxin]-dithiol = an alcohol + [thioredoxin]-disulfide + H2O. Thiol-specific peroxidase that catalyzes the reduction of hydrogen peroxide and organic hydroperoxides to water and alcohols, respectively. Plays a role in cell protection against oxidative stress by detoxifying peroxides. This chain is Peroxiredoxin 1, found in Caldanaerobacter subterraneus subsp. tengcongensis (strain DSM 15242 / JCM 11007 / NBRC 100824 / MB4) (Thermoanaerobacter tengcongensis).